Here is a 600-residue protein sequence, read N- to C-terminus: Aspartate--tRNA(Asp/Asn) ligase (600 aa).

Glu174 contributes to the L-aspartate binding site. The tract at residues 198–201 is aspartate; the sequence is QLFK. Arg220 contributes to the L-aspartate binding site. Residues 220 to 222 and Gln229 contribute to the ATP site; that span reads RDE. L-aspartate is bound at residue His457. ATP is bound at residue Glu491. Position 498 (Arg498) interacts with L-aspartate. 543-546 is a binding site for ATP; sequence GLDR.

It belongs to the class-II aminoacyl-tRNA synthetase family. Type 1 subfamily. Homodimer.

It is found in the cytoplasm. The catalysed reaction is tRNA(Asx) + L-aspartate + ATP = L-aspartyl-tRNA(Asx) + AMP + diphosphate. Aspartyl-tRNA synthetase with relaxed tRNA specificity since it is able to aspartylate not only its cognate tRNA(Asp) but also tRNA(Asn). Reaction proceeds in two steps: L-aspartate is first activated by ATP to form Asp-AMP and then transferred to the acceptor end of tRNA(Asp/Asn). The polypeptide is Aspartate--tRNA(Asp/Asn) ligase (Burkholderia vietnamiensis (strain G4 / LMG 22486) (Burkholderia cepacia (strain R1808))).